The primary structure comprises 177 residues: ATP synthase subunit delta (177 aa).

It belongs to the ATPase delta chain family. As to quaternary structure, F-type ATPases have 2 components, F(1) - the catalytic core - and F(0) - the membrane proton channel. F(1) has five subunits: alpha(3), beta(3), gamma(1), delta(1), epsilon(1). F(0) has three main subunits: a(1), b(2) and c(10-14). The alpha and beta chains form an alternating ring which encloses part of the gamma chain. F(1) is attached to F(0) by a central stalk formed by the gamma and epsilon chains, while a peripheral stalk is formed by the delta and b chains.

The protein localises to the cell inner membrane. In terms of biological role, f(1)F(0) ATP synthase produces ATP from ADP in the presence of a proton or sodium gradient. F-type ATPases consist of two structural domains, F(1) containing the extramembraneous catalytic core and F(0) containing the membrane proton channel, linked together by a central stalk and a peripheral stalk. During catalysis, ATP synthesis in the catalytic domain of F(1) is coupled via a rotary mechanism of the central stalk subunits to proton translocation. This protein is part of the stalk that links CF(0) to CF(1). It either transmits conformational changes from CF(0) to CF(1) or is implicated in proton conduction. The chain is ATP synthase subunit delta from Aeromonas hydrophila subsp. hydrophila (strain ATCC 7966 / DSM 30187 / BCRC 13018 / CCUG 14551 / JCM 1027 / KCTC 2358 / NCIMB 9240 / NCTC 8049).